The following is a 158-amino-acid chain: MKISILAVGGKMPAWVQEGYAEYAKRLPREIEPRMVELALANRSKSYSVDAVKQAEGEQILGAYDNAPGHKRLICLDVLGKSLRTEMLAEKMAAWQMDGVNPCLVIGGPDGLSQSCLQRADEKWSLSGLTMPHPLVRVLLIEQLYRAWTILQNHPYHK.

S-adenosyl-L-methionine-binding positions include leucine 76, glycine 107, and 126 to 131 (LSGLTM).

The protein belongs to the RNA methyltransferase RlmH family. As to quaternary structure, homodimer.

Its subcellular location is the cytoplasm. The enzyme catalyses pseudouridine(1915) in 23S rRNA + S-adenosyl-L-methionine = N(3)-methylpseudouridine(1915) in 23S rRNA + S-adenosyl-L-homocysteine + H(+). Specifically methylates the pseudouridine at position 1915 (m3Psi1915) in 23S rRNA. This chain is Ribosomal RNA large subunit methyltransferase H, found in Teredinibacter turnerae (strain ATCC 39867 / T7901).